The chain runs to 255 residues: Glutamate racemase (255 aa).

Substrate contacts are provided by residues 7–8 (DS) and 39–40 (YG). Cysteine 70 acts as the Proton donor/acceptor in catalysis. 71–72 (NT) contacts substrate. Cysteine 181 serves as the catalytic Proton donor/acceptor. 182-183 (TH) contributes to the substrate binding site.

The protein belongs to the aspartate/glutamate racemases family.

It carries out the reaction L-glutamate = D-glutamate. The protein operates within cell wall biogenesis; peptidoglycan biosynthesis. Provides the (R)-glutamate required for cell wall biosynthesis. The polypeptide is Glutamate racemase (Helicobacter pylori (strain Shi470)).